A 308-amino-acid chain; its full sequence is Putative hydrolase MT0526 (308 aa).

Residues 1–48 (MMVSSHLGSPDQAGHVDLASPADPPPPDASASHSPVDMPAPVAAAGSD) form a disordered region. Aspartate 62 acts as the Nucleophile in catalysis. Positions 62, 64, and 237 each coordinate Mg(2+). The Proton donor role is filled by aspartate 64.

The protein belongs to the HAD-like hydrolase superfamily. SerB family. Requires Mg(2+) as cofactor.

This Mycobacterium tuberculosis (strain CDC 1551 / Oshkosh) protein is Putative hydrolase MT0526.